A 292-amino-acid polypeptide reads, in one-letter code: F-box protein SKIP28 (292 aa).

In terms of domain architecture, F-box; degenerate spans 21-79; the sequence is LIVLPYLHSLFELLSMIRVSRSLRDAIRDETALWTKLVIEPPLSSRLTDDILSEFSSKS.

In terms of assembly, part of a SCF (ASK-cullin-F-box) protein ligase complex. Interacts with SKP1A/ASK1 and CUL1.

Its pathway is protein modification; protein ubiquitination. Functionally, component of SCF(ASK-cullin-F-box) E3 ubiquitin ligase complexes, which may mediate the ubiquitination and subsequent proteasomal degradation of target proteins. Required during the endosperm development in embryos. This Arabidopsis thaliana (Mouse-ear cress) protein is F-box protein SKIP28 (SKIP28).